Consider the following 352-residue polypeptide: Photosystem II D2 protein (352 aa).

Residues 40–60 (CAYLALGGWLTGTTFVTSWYT) form a helical membrane-spanning segment. H117 provides a ligand contact to chlorophyll a. Residues 124–140 (GFMLRQFEIAQSVRLRP) traverse the membrane as a helical segment. Pheophytin a-binding residues include Q129 and N142. The chain crosses the membrane as a helical span at residues 152 to 165 (VFVSVFLIYPLGQS). H197 is a binding site for chlorophyll a. Residues 207 to 227 (AALLCAIHGATVENTLFEDGD) form a helical membrane-spanning segment. H214 and F261 together coordinate a plastoquinone. Residue H214 participates in Fe cation binding. A Fe cation-binding site is contributed by H268. Residues 278 to 294 (GLWMSALGVVGLALNLR) traverse the membrane as a helical segment.

The protein belongs to the reaction center PufL/M/PsbA/D family. PSII is composed of 1 copy each of membrane proteins PsbA, PsbB, PsbC, PsbD, PsbE, PsbF, PsbH, PsbI, PsbJ, PsbK, PsbL, PsbM, PsbT, PsbY, PsbZ, Psb30/Ycf12, at least 3 peripheral proteins of the oxygen-evolving complex and a large number of cofactors. It forms dimeric complexes. The cofactor is The D1/D2 heterodimer binds P680, chlorophylls that are the primary electron donor of PSII, and subsequent electron acceptors. It shares a non-heme iron and each subunit binds pheophytin, quinone, additional chlorophylls, carotenoids and lipids. There is also a Cl(-1) ion associated with D1 and D2, which is required for oxygen evolution. The PSII complex binds additional chlorophylls, carotenoids and specific lipids..

It localises to the plastid. It is found in the chloroplast thylakoid membrane. The catalysed reaction is 2 a plastoquinone + 4 hnu + 2 H2O = 2 a plastoquinol + O2. Photosystem II (PSII) is a light-driven water:plastoquinone oxidoreductase that uses light energy to abstract electrons from H(2)O, generating O(2) and a proton gradient subsequently used for ATP formation. It consists of a core antenna complex that captures photons, and an electron transfer chain that converts photonic excitation into a charge separation. The D1/D2 (PsbA/PsbD) reaction center heterodimer binds P680, the primary electron donor of PSII as well as several subsequent electron acceptors. D2 is needed for assembly of a stable PSII complex. This Bigelowiella natans (Pedinomonas minutissima) protein is Photosystem II D2 protein.